The primary structure comprises 651 residues: Cysteine-rich receptor-like protein kinase 42 (651 aa).

A signal peptide spans 1 to 28 (MRCLTKTRSFHYVIIFYSFFFLPFLSSS). Residues 29–251 (SDDQRTTVSG…HHKFHVLFNK (223 aa)) lie on the Extracellular side of the membrane. 2 Gnk2-homologous domains span residues 35–135 (TVSG…TYEF) and 137–236 (DESV…DHKF). Asn-79 and Asn-151 each carry an N-linked (GlcNAc...) asparagine glycan. A helical transmembrane segment spans residues 252 to 272 (GVIVAIVLTTSAFVMLILLAT). The Cytoplasmic segment spans residues 273–651 (YVIMTKVSKT…SSESSTTRTI (379 aa)). The region spanning 315–604 (FSHKKMLGQG…IPSPTSPPFL (290 aa)) is the Protein kinase domain. ATP-binding positions include 321 to 329 (LGQGGNGTV) and Lys-343. Position 388 is a phosphotyrosine (Tyr-388). The active-site Proton acceptor is the Asp-440. Residues Ser-444 and Ser-473 each carry the phosphoserine modification. A phosphothreonine mark is found at Thr-474 and Thr-479. Tyr-487 is subject to Phosphotyrosine.

The protein belongs to the protein kinase superfamily. Ser/Thr protein kinase family. CRK subfamily.

It localises to the membrane. The enzyme catalyses L-seryl-[protein] + ATP = O-phospho-L-seryl-[protein] + ADP + H(+). It carries out the reaction L-threonyl-[protein] + ATP = O-phospho-L-threonyl-[protein] + ADP + H(+). This Arabidopsis thaliana (Mouse-ear cress) protein is Cysteine-rich receptor-like protein kinase 42 (CRK42).